The primary structure comprises 400 residues: Methylthioribose kinase (400 aa).

ATP is bound by residues asparagine 44, lysine 61, and 115-117; that span reads EDL. A substrate-binding site is contributed by aspartate 233. 250–252 serves as a coordination point for ATP; sequence DPE. Residue arginine 340 participates in substrate binding.

It belongs to the methylthioribose kinase family. In terms of assembly, homodimer.

It catalyses the reaction 5-(methylsulfanyl)-D-ribose + ATP = 5-(methylsulfanyl)-alpha-D-ribose 1-phosphate + ADP + H(+). The protein operates within amino-acid biosynthesis; L-methionine biosynthesis via salvage pathway; S-methyl-5-thio-alpha-D-ribose 1-phosphate from S-methyl-5'-thioadenosine (hydrolase route): step 2/2. In terms of biological role, catalyzes the phosphorylation of methylthioribose into methylthioribose-1-phosphate. This chain is Methylthioribose kinase, found in Geobacillus sp. (strain WCH70).